The following is a 267-amino-acid chain: Tryptophan synthase alpha chain (267 aa).

Catalysis depends on proton acceptor residues Glu-49 and Asp-60.

Belongs to the TrpA family. As to quaternary structure, tetramer of two alpha and two beta chains.

The catalysed reaction is (1S,2R)-1-C-(indol-3-yl)glycerol 3-phosphate + L-serine = D-glyceraldehyde 3-phosphate + L-tryptophan + H2O. It participates in amino-acid biosynthesis; L-tryptophan biosynthesis; L-tryptophan from chorismate: step 5/5. Its function is as follows. The alpha subunit is responsible for the aldol cleavage of indoleglycerol phosphate to indole and glyceraldehyde 3-phosphate. The sequence is that of Tryptophan synthase alpha chain from Pelobacter propionicus (strain DSM 2379 / NBRC 103807 / OttBd1).